A 634-amino-acid polypeptide reads, in one-letter code: ATP-dependent zinc metalloprotease FtsH (634 aa).

The Cytoplasmic segment spans residues 1–5; sequence MNALK. Residues 6–26 traverse the membrane as a helical segment; sequence NFFIWAIIIGAAIVAFNLFEG. At 27-100 the chain is on the periplasmic side; that stretch reads KREFTTKVSL…VANPEPPGGW (74 aa). A helical transmembrane segment spans residues 101–121; the sequence is LVNVFLSWLPILFFIGIWIFL. Residues 122-634 are Cytoplasmic-facing; sequence LRQMSGGGNV…KSEEVKEEVV (513 aa). Residue 195–202 participates in ATP binding; it reads GEPGVGKT. Residue histidine 418 participates in Zn(2+) binding. Glutamate 419 is an active-site residue. Zn(2+) is bound by residues histidine 422 and aspartate 496. The disordered stretch occupies residues 615-634; that stretch reads DRKSEENKELKSEEVKEEVV.

The protein in the central section; belongs to the AAA ATPase family. It in the C-terminal section; belongs to the peptidase M41 family. In terms of assembly, the isolated protease domain (residues 405-634) forms a stable hexamer. Zn(2+) serves as cofactor.

The protein localises to the cell inner membrane. Acts as a processive, ATP-dependent zinc metallopeptidase for both cytoplasmic and membrane proteins. Plays a role in the quality control of integral membrane proteins. The polypeptide is ATP-dependent zinc metalloprotease FtsH (Aquifex aeolicus (strain VF5)).